The primary structure comprises 293 residues: MTTQQDYTQDNDKLYRYLFQHRAVRGEWVRLNKTFTDTLNTHQYPKAVQDLLGEMMVATNLLTATLKFDGNITVQIQGDGPLRLALVNGNDQQQIRALARVDGNITENMSLHNMIGKGVLVITIAPKEGERYQGVISLDKPTITECLEDYFVRSEQLQTQLIIRTGEYEGKPVAAGMLLQIMPDGSGTPEDFEHLTTLAATVKDEELFGLPAEELLYRLYHEETVNLYPEQDVQFFCGCSAERSGSALLLISDEEIDEILAEHKGSIDMQCECCGTHYFFNKEAIEKLKSTRV.

2 disulfides stabilise this stretch: cysteine 237–cysteine 239 and cysteine 271–cysteine 274.

The protein belongs to the HSP33 family. In terms of processing, under oxidizing conditions two disulfide bonds are formed involving the reactive cysteines. Under reducing conditions zinc is bound to the reactive cysteines and the protein is inactive.

The protein resides in the cytoplasm. Functionally, redox regulated molecular chaperone. Protects both thermally unfolding and oxidatively damaged proteins from irreversible aggregation. Plays an important role in the bacterial defense system toward oxidative stress. This is 33 kDa chaperonin from Haemophilus influenzae (strain PittEE).